A 154-amino-acid chain; its full sequence is Large ribosomal subunit protein uL30 (154 aa).

Positions Arg-122 to His-141 are disordered.

Belongs to the universal ribosomal protein uL30 family. Part of the 50S ribosomal subunit.

The protein is Large ribosomal subunit protein uL30 of Halobacterium salinarum (strain ATCC 29341 / DSM 671 / R1).